The following is a 123-amino-acid chain: Large ribosomal subunit protein uL18 (123 aa).

It belongs to the universal ribosomal protein uL18 family. As to quaternary structure, part of the 50S ribosomal subunit; part of the 5S rRNA/L5/L18/L25 subcomplex. Contacts the 5S and 23S rRNAs.

In terms of biological role, this is one of the proteins that bind and probably mediate the attachment of the 5S RNA into the large ribosomal subunit, where it forms part of the central protuberance. In Wolbachia sp. subsp. Brugia malayi (strain TRS), this protein is Large ribosomal subunit protein uL18.